Consider the following 606-residue polypeptide: Replication protein E1 (606 aa).

The short motif at 76 to 78 (KRK) is the Nuclear localization signal element. 2 positions are modified to phosphoserine; by host: Ser81 and Ser89. Residues 144 to 307 (GTGDVDIDYL…TVLGHQNAEA (164 aa)) form a DNA-binding region region. The region spanning 406–556 (VNFIMFLAAL…FPMKSDNTPQ (151 aa)) is the SF3 helicase domain. Position 432 to 439 (432 to 439 (GPPNSGKS)) interacts with ATP. Lys513 participates in a covalent cross-link: Glycyl lysine isopeptide (Lys-Gly) (interchain with G-Cter in SUMO). The interval 581–606 (EEEEEGEHGETQRAFQCSARSANEHI) is disordered. Residues 593 to 606 (RAFQCSARSANEHI) show a composition bias toward polar residues.

Belongs to the papillomaviridae E1 protein family. As to quaternary structure, can form hexamers. Interacts with E2 protein; this interaction increases E1 DNA binding specificity. Interacts with host DNA polymerase subunit POLA2. Interacts with host single stranded DNA-binding protein RPA1. Interacts with host TOP1; this interaction stimulates the enzymatic activity of TOP1. In terms of processing, phosphorylated. Post-translationally, sumoylated.

It is found in the host nucleus. It carries out the reaction Couples ATP hydrolysis with the unwinding of duplex DNA by translocating in the 3'-5' direction.. The enzyme catalyses ATP + H2O = ADP + phosphate + H(+). In terms of biological role, ATP-dependent DNA 3'-5' helicase required for initiation of viral DNA replication. It forms a complex with the viral E2 protein. The E1-E2 complex binds to the replication origin which contains binding sites for both proteins. During the initial step, a dimer of E1 interacts with a dimer of protein E2 leading to a complex that binds the viral origin of replication with high specificity. Then, a second dimer of E1 displaces the E2 dimer in an ATP-dependent manner to form the E1 tetramer. Following this, two E1 monomers are added to each half of the site, which results in the formation of two E1 trimers on the viral ori. Subsequently, two hexamers will be created. The double hexamer acts as a bi-directional helicase machinery and unwinds the viral DNA and then recruits the host DNA polymerase to start replication. The sequence is that of Replication protein E1 from Human papillomavirus type RTRX7.